A 357-amino-acid polypeptide reads, in one-letter code: Non-structural protein NS2 (357 aa).

Disordered regions lie at residues 163–199 (NERESAPRLQVQSVAPREESRWMDDDEAKVDEEAREM) and 228–267 (LDEKDEEDGDEREDEERVKTLSDDDEQGEDASDDEHPKTH). 2 stretches are compositionally biased toward acidic residues: residues 230–241 (EKDEEDGDERED) and 250–260 (DDDEQGEDASD).

This sequence belongs to the orbivirus non-structural protein NS2 family.

Single-stranded RNA-binding protein. In Antilocapra americana (Pronghorn), this protein is Non-structural protein NS2 (Segment-8).